Consider the following 153-residue polypeptide: Small ribosomal subunit protein bS16 (153 aa).

Positions 114–153 (ENEPVGEAITPKKKKAKAEDAEAAADAPAEAAAESEAADK) are disordered. Over residues 137–153 (AADAPAEAAAESEAADK) the composition is skewed to low complexity.

The protein belongs to the bacterial ribosomal protein bS16 family.

This Rhodococcus opacus (strain B4) protein is Small ribosomal subunit protein bS16.